Consider the following 884-residue polypeptide: Kinesin-like protein KIN-7C (884 aa).

A Kinesin motor domain is found at 33–355; the sequence is RIQVLVRLRP…LLFGSCAKEV (323 aa). Position 119–126 (119–126) interacts with ATP; it reads GQTSSGKT. Residues 364–435 are a coiled coil; that stretch reads VMSDKALVKH…LQDLLQSVGD (72 aa). The segment at 434 to 530 is disordered; it reads GDHDLNRQVQ…VNSRHSRPSG (97 aa). Residues 449 to 460 show a composition bias toward low complexity; it reads RSPPSVGMPPSV. A compositionally biased stretch (basic and acidic residues) spans 461-483; that stretch reads SRDDSSQVSHDDSDLYKEVRCIE. Over residues 498-523 the composition is skewed to polar residues; sequence GESSSPQDSNMNSGLHGNDSNASVNS.

This sequence belongs to the TRAFAC class myosin-kinesin ATPase superfamily. Kinesin family. KIN-7 subfamily.

This chain is Kinesin-like protein KIN-7C, found in Oryza sativa subsp. japonica (Rice).